Reading from the N-terminus, the 622-residue chain is MAMMVFPREEKLSQDEIVLGTKAVIQGLETLRGEHRALLAPLVAPEAGEAEPGSQERCILLRRSLEAIELGLGEAQVILALSSHLGAVESEKQKLRAQVRRLVQENQWLREELAGTQQKLQRSEQAVAQLEEEKQHLLFMSQIRKLDEDASPNEEKGDVPKDTLDDLFPNEDEQSPAPSPGGGDVSGQHGGYEIPARLRTLHNLVIQYASQGRYEVAVPLCKQALEDLEKTSGHDHPDVATMLNILALVYRDQNKYKEAAHLLNDALAIREKTLGKDHPAVAATLNNLAVLYGKRGKYKEAEPLCKRALEIREKVLGKFHPDVAKQLSNLALLCQNQGKAEEVEYYYRRALEIYATRLGPDDPNVAKTKNNLASCYLKQGKYQDAETLYKEILTRAHEKEFGSVNGDNKPIWMHAEEREESKDKRRDSAPYGEYGSWYKACKVDSPTVNTTLRSLGALYRRQGKLEAAHTLEDCASRNRKQGLDPASQTKVVELLKDGSGRRGDRRSSRDMAGGAGPRSESDLEDVGPTAEWNGDGSGSLRRSGSFGKLRDALRRSSEMLVKKLQGGTPQEPPNPRMKRASSLNFLNKSVEEPTQPGGTGLSDSRTLSSSSMDLSRRSSLVG.

The stretch at 78 to 143 forms a coiled coil; that stretch reads ILALSSHLGA…KQHLLFMSQI (66 aa). Over residues 145–164 the composition is skewed to basic and acidic residues; the sequence is KLDEDASPNEEKGDVPKDTL. The segment at 145 to 191 is disordered; that stretch reads KLDEDASPNEEKGDVPKDTLDDLFPNEDEQSPAPSPGGGDVSGQHGG. Phosphoserine is present on residues serine 151, serine 175, and serine 179. Residues 180 to 190 show a composition bias toward gly residues; the sequence is PGGGDVSGQHG. TPR repeat units follow at residues 198–231, 240–273, 282–315, 324–357, and 366–399; these read LRTLHNLVIQYASQGRYEVAVPLCKQALEDLEKT, ATMLNILALVYRDQNKYKEAAHLLNDALAIREKT, AATLNNLAVLYGKRGKYKEAEPLCKRALEIREKV, AKQLSNLALLCQNQGKAEEVEYYYRRALEIYATR, and AKTKNNLASCYLKQGKYQDAETLYKEILTRAHEK. Serine 445 bears the Phosphoserine mark. The stretch at 449 to 482 is one TPR 6 repeat; that stretch reads NTTLRSLGALYRRQGKLEAAHTLEDCASRNRKQG. Disordered regions lie at residues 476 to 548 and 563 to 622; these read SRNR…SFGK and KLQG…SLVG. Over residues 493–509 the composition is skewed to basic and acidic residues; that stretch reads ELLKDGSGRRGDRRSSR. A phosphoserine mark is found at serine 508 and serine 521. Low complexity predominate over residues 538-547; the sequence is GSLRRSGSFG. Phosphoserine is present on residues serine 581, serine 582, serine 589, serine 608, serine 610, and serine 615. A compositionally biased stretch (low complexity) spans 601 to 622; that stretch reads LSDSRTLSSSSMDLSRRSSLVG.

This sequence belongs to the kinesin light chain family. Oligomeric complex composed of two heavy chains and two light chains. Interacts (via TPR repeats) with PLEKHM2.

The protein resides in the cytoplasm. It localises to the cytoskeleton. Its subcellular location is the lysosome membrane. In terms of biological role, kinesin is a microtubule-associated force-producing protein that plays a role in organelle transport. The light chain functions in coupling of cargo to the heavy chain or in the modulation of its ATPase activity. Through binding with PLEKHM2 and ARL8B, recruits kinesin-1 to lysosomes and hence direct lysosomes movement toward microtubule plus ends. The polypeptide is Kinesin light chain 2 (Homo sapiens (Human)).